The primary structure comprises 199 residues: Insertion sequence IS21-like putative ATP-binding protein (199 aa).

An ATP-binding site is contributed by 114–121; sequence GDSGTGKT.

This sequence belongs to the IS21/IS1162 putative ATP-binding protein family.

This chain is Insertion sequence IS21-like putative ATP-binding protein (tnpB), found in Bacteroides fragilis (strain YCH46).